The chain runs to 462 residues: ATP synthase subunit beta (462 aa).

150 to 157 (GGAGVGKT) contacts ATP.

The protein belongs to the ATPase alpha/beta chains family. F-type ATPases have 2 components, CF(1) - the catalytic core - and CF(0) - the membrane proton channel. CF(1) has five subunits: alpha(3), beta(3), gamma(1), delta(1), epsilon(1). CF(0) has three main subunits: a(1), b(2) and c(9-12). The alpha and beta chains form an alternating ring which encloses part of the gamma chain. CF(1) is attached to CF(0) by a central stalk formed by the gamma and epsilon chains, while a peripheral stalk is formed by the delta and b chains.

It localises to the cell membrane. It carries out the reaction ATP + H2O + 4 H(+)(in) = ADP + phosphate + 5 H(+)(out). In terms of biological role, produces ATP from ADP in the presence of a proton gradient across the membrane. The catalytic sites are hosted primarily by the beta subunits. The chain is ATP synthase subunit beta from Wigglesworthia glossinidia brevipalpis.